A 98-amino-acid chain; its full sequence is Large ribosomal subunit protein uL23 (98 aa).

This sequence belongs to the universal ribosomal protein uL23 family. In terms of assembly, part of the 50S ribosomal subunit. Contacts protein L29, and trigger factor when it is bound to the ribosome.

One of the early assembly proteins it binds 23S rRNA. One of the proteins that surrounds the polypeptide exit tunnel on the outside of the ribosome. Forms the main docking site for trigger factor binding to the ribosome. The sequence is that of Large ribosomal subunit protein uL23 from Bifidobacterium longum (strain DJO10A).